Reading from the N-terminus, the 367-residue chain is Biotin--protein ligase 1, chloroplastic (367 aa).

The transit peptide at 1 to 37 directs the protein to the chloroplast; it reads MEAVRSTTTLSNFHLLNILVLRSLKPLHRLSFSFSAS. The BPL/LPL catalytic domain occupies 105-289; the sequence is IITHRFGRFL…KFEKFFDLFM (185 aa). Biotin is bound by residues 122 to 124, Gln-145, 149 to 151, and Lys-220; these read STH and RGR.

This sequence belongs to the biotin--protein ligase family. In terms of tissue distribution, expressed in roots, leaves, stems, flowers, siliques and seeds.

The protein localises to the plastid. The protein resides in the chloroplast. It is found in the cytoplasm. Its subcellular location is the cytosol. The catalysed reaction is apo-[3-methylcrotonoyl-CoA:carbon-dioxide ligase (ADP-forming)] + biotin + ATP = holo-[3-methylcrotonoyl-CoA:carbon-dioxide ligase (ADP-forming)] + AMP + diphosphate + H(+). It catalyses the reaction biotin + L-lysyl-[protein] + ATP = N(6)-biotinyl-L-lysyl-[protein] + AMP + diphosphate + H(+). Plays a major role in biotin-dependent carboxylase biotinylation. Catalyzes the addition of biotin to the biotin carboxyl carrier protein (BCCP) subunit of acetyl-CoA carboxylase. Can also biotinylate methylcrotonyl-CoA carboxylase. Is responsible for most, if not all, biotin--protein ligase activity in Arabidopsis. Is essential for plant viability and required for ovule development. This Arabidopsis thaliana (Mouse-ear cress) protein is Biotin--protein ligase 1, chloroplastic.